The sequence spans 220 residues: Zip homologous protein 1 (220 aa).

The segment at cysteine 6 to lysine 44 adopts an RING-type zinc-finger fold. Residues leucine 124–lysine 155 are a coiled coil. Disordered regions lie at residues glutamate 166 to aspartate 186 and arginine 201 to phenylalanine 220. Polar residues predominate over residues glycine 171 to valine 180.

Interacts with zhp-2; the interaction is required for their chromosome association and stability. As to expression, expressed in the germline.

Its subcellular location is the chromosome. Functionally, recruited co-dependently with zhp-2 to the synaptonemal complex between homologous chromosome pairs to regulate the formation and number of crossover events between homologs during meiotic recombination. Together with zhp-2, promotes the accumulation of pro-crossover proteins, including zhp-3 and zhp-4, at a designated crossover site along the recombination intermediate. Limits the number of crossover sites along a recombination intermediate by restricting the association of these pro-crossover proteins with other recombination sites during late prophase. Also, together with zhp-2, plays a role in chromosome remodeling following crossover formation to promote two successive rounds of chromosome segregation during meiosis. The chain is Zip homologous protein 1 from Caenorhabditis elegans.